Consider the following 894-residue polypeptide: Histone-lysine N-methyltransferase PRDM9 (894 aa).

2 disordered regions span residues 1–23 (MSPEKSQEESPEEDTERTERKPM) and 143–174 (SGSEQAQKPVSPSGEASTSGQHSRLKLELRKK). In terms of domain architecture, KRAB-related spans 23 to 86 (MVKDAFKDIS…RRQAIKLQVD (64 aa)). Polar residues predominate over residues 143-164 (SGSEQAQKPVSPSGEASTSGQH). 4 residues coordinate Zn(2+): cysteine 205, cysteine 208, cysteine 216, and histidine 219. The 115-residue stretch at 244 to 358 (PGLRIGPSGI…PGCELLVWYG (115 aa)) folds into the SET domain. Residues 256-258 (AGL), tyrosine 291, and 320-321 (NC) contribute to the S-adenosyl-L-methionine site. 288–294 (NNGYSWL) provides a ligand contact to substrate. Tyrosine 357 provides a ligand contact to substrate. The residue at position 368 (lysine 368) is an N6,N6,N6-trimethyllysine; alternate. Position 368 is an N6-methyllysine; alternate (lysine 368). An N6-methyllysine mark is found at lysine 372 and lysine 374. Residues 388 to 411 (HPCPSCCLAFSSQKFLSQHVERNH) form a C2H2-type 1 zinc finger. Zn(2+) contacts are provided by cysteine 390, cysteine 393, histidine 406, and histidine 411. The tract at residues 408 to 469 (ERNHSSQNFP…SKLLNKRTWQ (62 aa)) is disordered. The segment covering 444–461 (PHSRNDKTKGQEIKERSK) has biased composition (basic and acidic residues). Residues 524–546 (VKYGECGQGFSVKSDVITHQRTH) form a C2H2-type 2; degenerate zinc finger. C2H2-type zinc fingers lie at residues 552-574 (YVCRECGRGFSWKSHLLIHQRIH), 580-602 (YVCRECGRGFSWQSVLLTHQRTH), 608-630 (YVCRECGRGFSRQSVLLTHQRRH), 636-658 (YVCRECGRGFSRQSVLLTHQRRH), 664-686 (YVCRECGRGFSWQSVLLTHQRTH), 692-714 (YVCRECGRGFSWQSVLLTHQRTH), 720-742 (YVCRECGRGFSNKSHLLRHQRTH), 748-770 (YVCRECGRGFRDKSHLLRHQRTH), 776-798 (YVCRECGRGFRDKSNLLSHQRTH), 804-826 (YVCRECGRGFSNKSHLLRHQRTH), 832-854 (YVCRECGRGFRNKSHLLRHQRTH), and 860-882 (YVCRECGRGFSDRSSLCYHQRTH). Positions 722, 725, 738, 742, 750, 753, 766, 770, 778, 781, 794, 798, 806, 809, 822, and 826 each coordinate Zn(2+). Residues 730-820 (SNKSHLLRHQ…RGFSNKSHLL (91 aa)) are DNA-binding.

Belongs to the class V-like SAM-binding methyltransferase superfamily. In terms of assembly, homodimer. Interacts with EHMT2 and CDYL; interaction only takes place when PRDM9 is bound to hotspot DNA. Interacts with CXXC1; this interaction does not link PRDM9-activated recombination hotspot sites with DSB machinery and is not required for the hotspot recognition pathway. Forms a complex with EWSR1, REC8, SYCP3 and SYCP1; complex formation is dependent of phosphorylated form of REC8 and requires PRDM9 bound to hotspot DNA; EWSR1 joins PRDM9 with the chromosomal axis through REC8. Mono-methylated; automethylated. Tri-methylated; automethylated. Mono-methylation is predominant; automethylation is lower and slower than H3 peptide methylation and is in a highest S-adenosyl-L-methionine concentration-dependent. There are two major sites for automethylation at Lys-368 and Lys-374. Lysines can be simultaneously methylated, such as Lys-368(me3)/Lys-372(me1), Lys-368(me1)/Lys-374(me1) and Lys-368(me1)/Lys-372(me1)/Lys-374(me1). Automethylation is an intramolecular (cis) process.

It is found in the nucleus. The protein localises to the chromosome. It catalyses the reaction L-lysyl-[protein] + S-adenosyl-L-methionine = N(6)-methyl-L-lysyl-[protein] + S-adenosyl-L-homocysteine + H(+). The enzyme catalyses N(6)-methyl-L-lysyl-[protein] + S-adenosyl-L-methionine = N(6),N(6)-dimethyl-L-lysyl-[protein] + S-adenosyl-L-homocysteine + H(+). The catalysed reaction is L-lysyl(4)-[histone H3] + 3 S-adenosyl-L-methionine = N(6),N(6),N(6)-trimethyl-L-lysyl(4)-[histone H3] + 3 S-adenosyl-L-homocysteine + 3 H(+). It carries out the reaction L-lysyl(36)-[histone H3] + 3 S-adenosyl-L-methionine = N(6),N(6),N(6)-trimethyl-L-lysyl(36)-[histone H3] + 3 S-adenosyl-L-homocysteine + 3 H(+). It catalyses the reaction L-lysyl(9)-[histone H3] + 3 S-adenosyl-L-methionine = N(6),N(6),N(6)-trimethyl-L-lysyl(9)-[histone H3] + 3 S-adenosyl-L-homocysteine + 3 H(+). The enzyme catalyses L-lysyl(20)-[histone H4] + S-adenosyl-L-methionine = N(6)-methyl-L-lysyl(20)-[histone H4] + S-adenosyl-L-homocysteine + H(+). The catalysed reaction is N(6)-methyl-L-lysyl(20)-[histone H4] + S-adenosyl-L-methionine = N(6),N(6)-dimethyl-L-lysyl(20)-[histone H4] + S-adenosyl-L-homocysteine + H(+). Inhibited by suramin with an IC(50) of 4.1 uM. Functionally, histone methyltransferase that sequentially mono-, di-, and tri-methylates both 'Lys-4' (H3K4) and 'Lys-36' (H3K36) of histone H3 to produce respectively trimethylated 'Lys-4' (H3K4me3) and trimethylated 'Lys-36' (H3K36me3) histone H3 and plays a key role in meiotic prophase by determining hotspot localization thereby promoting meiotic recombination. Can also methylate all four core histones with H3 being the best substrate and the most highly modified. Is also able, on one hand, to mono and di-methylate H4K20 and on other hand to trimethylate H3K9 with the di-methylated H3K9 as the best substrate. During meiotic prophase, binds specific DNA sequences through its zinc finger domains thereby determining hotspot localization where it promotes local H3K4me3 and H3K36me3 enrichment on the same nucleosomes through its histone methyltransferase activity. Thereby promotes double-stranded breaks (DSB) formation, at this subset of PRDM9-binding sites, that initiates meiotic recombination for the proper meiotic progression. During meiotic progression hotspot-bound PRDM9 interacts with several complexes; in early leptonema binds CDYL and EHMT2 followed by EWSR1 and CXXC1 by the end of leptonema. EWSR1 joins PRDM9 with the chromosomal axis through REC8. In this way, controls the DSB repair pathway, pairing of homologous chromosomes and sex body formation. Moreover plays a central role in the transcriptional activation of genes during early meiotic prophase thanks to H3K4me3 and H3K36me3 enrichment that represents a specific tag for epigenetic transcriptional activation. In addition performs automethylation. Acetylation and phosphorylation of histone H3 attenuate or prevent histone H3 methylation. The sequence is that of Histone-lysine N-methyltransferase PRDM9 from Homo sapiens (Human).